Reading from the N-terminus, the 257-residue chain is Ethanolamine ammonia-lyase small subunit (257 aa).

Adenosylcob(III)alamin contacts are provided by valine 153, glutamate 174, and cysteine 203.

The protein belongs to the EutC family. The basic unit is a heterodimer which dimerizes to form tetramers. The heterotetramers trimerize; 6 large subunits form a core ring with 6 small subunits projecting outwards. It depends on adenosylcob(III)alamin as a cofactor.

It is found in the bacterial microcompartment. The enzyme catalyses ethanolamine = acetaldehyde + NH4(+). It functions in the pathway amine and polyamine degradation; ethanolamine degradation. Functionally, catalyzes the deamination of various vicinal amino-alcohols to oxo compounds. Allows this organism to utilize ethanolamine as the sole source of nitrogen and carbon in the presence of external vitamin B12. The sequence is that of Ethanolamine ammonia-lyase small subunit from Rhodococcus erythropolis (Arthrobacter picolinophilus).